Consider the following 103-residue polypeptide: Small ribosomal subunit protein uS10 (103 aa).

It belongs to the universal ribosomal protein uS10 family. As to quaternary structure, part of the 30S ribosomal subunit.

Involved in the binding of tRNA to the ribosomes. The polypeptide is Small ribosomal subunit protein uS10 (Borrelia recurrentis (strain A1)).